The chain runs to 406 residues: CMP-sialic acid transporter 2 (406 aa).

At 1 to 41 the chain is on the cytoplasmic side; the sequence is MKNGMAECSVCRSRLVSPSSKAISRAYDNYNYKIRVSSKQR. A helical transmembrane segment spans residues 42–62; sequence ALNVFLVVGDCMLVGLQPVLV. At 63-75 the chain is on the lumenal side; it reads YMSKVDGKFNFSP. A helical membrane pass occupies residues 76 to 96; sequence ISVNFLTEIAKVIFAMVMLLF. Topologically, residues 97 to 148 are cytoplasmic; it reads QARHQKVGEKPLLSLSTFVQAARNNMLLAVPAGLYAINNYLKFTMQLYFNPA. The chain crosses the membrane as a helical span at residues 149–169; it reads TVKMLSNLKVLVIAVLLKMIM. Over 170–172 the chain is Lumenal; sequence KRR. Residues 173–193 form a helical membrane-spanning segment; the sequence is FSIIQWEALALLLIGISINQL. The Cytoplasmic segment spans residues 194–201; the sequence is RSLPEGAT. Residues 202–222 traverse the membrane as a helical segment; it reads TVAVPIATGAYICTFIFVTVP. At 223-245 the chain is on the lumenal side; the sequence is SLASVYNEYALKSQYDTSIYLQN. The chain crosses the membrane as a helical span at residues 246–266; that stretch reads LFLYGYGAIFNFLGILGTVIY. Residues 267-282 lie on the Cytoplasmic side of the membrane; that stretch reads KGPGSFDILQGHSRAT. Residues 283–303 form a helical membrane-spanning segment; it reads MFLILNNAAQGILSSFFFKYA. At 304-323 the chain is on the lumenal side; it reads DTILKKYSSTVATIFTGIAS. The helical transmembrane segment at 324–344 threads the bilayer; it reads AALFGHILTMNFLLGISIVFI. Residues 345 to 406 are Cytoplasmic-facing; that stretch reads SMHQFFSPLS…SDDRVPLLPR (62 aa).

The protein belongs to the nucleotide-sugar transporter family. CMP-Sialate:CMP antiporter (TC 2.A.7.12) subfamily.

The protein resides in the golgi apparatus membrane. Functionally, sugar transporter involved in the transport of CMP-sialic acid from the cytoplasm into the Golgi. In Arabidopsis thaliana (Mouse-ear cress), this protein is CMP-sialic acid transporter 2.